We begin with the raw amino-acid sequence, 236 residues long: MHQRNHHSILLTLLLYLQSIVALARIIDPEFGTYSNPNPRKYPQCQANDLVKLSSCCNELLHKLDQCKSDDLACECCALQSIDRDCYHLCPGNPSTNFLTVLLQDCAQLSEINACALPFKKTDDLLVDKKKGTPNSKSAVQALEADEKYDASLKSKVHNKVDEIKSHVKQDQFLKKKIKLLIDKDETFAIQNHSNNSNNTISAKSESGSVCLTSSYLNSPIIILCAILTGTLFAMY.

The N-terminal stretch at M1–A24 is a signal peptide. Residues N192, N195, and N198 are each glycosylated (N-linked (GlcNAc...) asparagine). Residue G208 is the site of GPI-anchor amidated glycine attachment. Residues S209 to Y236 constitute a propeptide, removed in mature form.

Its subcellular location is the cell membrane. In Candida albicans (strain SC5314 / ATCC MYA-2876) (Yeast), this protein is Predicted GPI-anchored protein 43 (PGA43).